The chain runs to 380 residues: Cobalt-precorrin-5B C(1)-methyltransferase (380 aa).

The protein belongs to the CbiD family.

It carries out the reaction Co-precorrin-5B + S-adenosyl-L-methionine = Co-precorrin-6A + S-adenosyl-L-homocysteine. It participates in cofactor biosynthesis; adenosylcobalamin biosynthesis; cob(II)yrinate a,c-diamide from sirohydrochlorin (anaerobic route): step 6/10. Catalyzes the methylation of C-1 in cobalt-precorrin-5B to form cobalt-precorrin-6A. This Salinispora arenicola (strain CNS-205) protein is Cobalt-precorrin-5B C(1)-methyltransferase.